Here is a 194-residue protein sequence, read N- to C-terminus: MAPRLVLASQSPRRRELLGQLGLALDVRPADTDERVLPGEPPRDYVLRVAREKARAVPGEVVLAADTAVVLGGEVLGKPRDAEDARRMLRALSGTRHEVLTGVCVRRNASALGVELDAVVATEVAFARLGDAEIDWYVGTGEPLDKAGAYAIQGSGGAFVQEVRGSVSNVVGLPLAETAALLRRAGFPLPWEQP.

The Proton acceptor role is filled by D66.

The protein belongs to the Maf family. YhdE subfamily. It depends on a divalent metal cation as a cofactor.

It is found in the cytoplasm. The catalysed reaction is dTTP + H2O = dTMP + diphosphate + H(+). The enzyme catalyses UTP + H2O = UMP + diphosphate + H(+). Functionally, nucleoside triphosphate pyrophosphatase that hydrolyzes dTTP and UTP. May have a dual role in cell division arrest and in preventing the incorporation of modified nucleotides into cellular nucleic acids. This chain is dTTP/UTP pyrophosphatase, found in Anaeromyxobacter dehalogenans (strain 2CP-C).